The primary structure comprises 428 residues: Palmitoyltransferase ZDHHC23-B (428 aa).

The Cytoplasmic portion of the chain corresponds to 1–82; that stretch reads MSIMKKRSSR…RVPWISGARQ (82 aa). A helical transmembrane segment spans residues 83-99; it reads IDVSLIPPLILLPVFLH. At 100 to 105 the chain is on the lumenal side; sequence IAALHY. The helical transmembrane segment at 106 to 125 threads the bilayer; that stretch reads LLGIIMLTAMPITVLWYYFF. The Cytoplasmic portion of the chain corresponds to 126–132; sequence THRKKGR. The chain crosses the membrane as a helical span at residues 133 to 153; it reads TLFFLGLALFSLFYMFYLFLT. Over 154 to 160 the chain is Lumenal; it reads QVVPRGE. A helical membrane pass occupies residues 161–181; sequence VTELQLAVVTAGVALTVIFLM. Topologically, residues 182–294 are cytoplasmic; it reads LTKRGPGLVR…SCVGLANHRT (113 aa). The DHHC domain maps to 250 to 300; the sequence is NWCAVCKVVRPQRAGHCRICGVCVLRLDHHCVWINSCVGLANHRTFLLTLL. The active-site S-palmitoyl cysteine intermediate is C280. A helical transmembrane segment spans residues 295–315; the sequence is FLLTLLFFLLTSIYGISLVLA. Residues 316–350 lie on the Lumenal side of the membrane; sequence SVCPDQRVLTALFYCPDVYSQYSSALCFTCAWYSS. Residues 351–371 traverse the membrane as a helical segment; that stretch reads IVTGGLLHLLLLQILNISLNV. The Cytoplasmic segment spans residues 372 to 428; that stretch reads TEREARLALREKSAQRRLWGLIVHTGHYSRGFWSNWTEFLTMTEDTQPAGHKTEDLV.

Belongs to the DHHC palmitoyltransferase family.

It is found in the golgi apparatus membrane. It localises to the golgi apparatus. The protein localises to the trans-Golgi network membrane. The enzyme catalyses L-cysteinyl-[protein] + hexadecanoyl-CoA = S-hexadecanoyl-L-cysteinyl-[protein] + CoA. Its function is as follows. Palmitoyltransferase that could catalyze the addition of palmitate onto various protein substrates and be involved in a variety of cellular processes. The protein is Palmitoyltransferase ZDHHC23-B of Danio rerio (Zebrafish).